The sequence spans 222 residues: Uracil-DNA glycosylase (222 aa).

Catalysis depends on Asp61, which acts as the Proton acceptor.

This sequence belongs to the uracil-DNA glycosylase (UDG) superfamily. UNG family.

It is found in the cytoplasm. It carries out the reaction Hydrolyzes single-stranded DNA or mismatched double-stranded DNA and polynucleotides, releasing free uracil.. Excises uracil residues from the DNA which can arise as a result of misincorporation of dUMP residues by DNA polymerase or due to deamination of cytosine. This is Uracil-DNA glycosylase from Aeromonas hydrophila subsp. hydrophila (strain ATCC 7966 / DSM 30187 / BCRC 13018 / CCUG 14551 / JCM 1027 / KCTC 2358 / NCIMB 9240 / NCTC 8049).